The primary structure comprises 589 residues: Oligo-1,6-glucosidase IMA3 (589 aa).

The Nucleophile role is filled by Asp215. Residue Glu277 is the Proton donor of the active site.

It belongs to the glycosyl hydrolase 13 family.

The protein localises to the cytoplasm. It carries out the reaction Hydrolysis of (1-&gt;6)-alpha-D-glucosidic linkages in some oligosaccharides produced from starch and glycogen by alpha-amylase, and in isomaltose.. Alpha-glucosidase with broad substrate specificity for alpha-1,4- and alpha-1,6-glucosides. Not required for isomaltose utilization, but overexpression allows the IMA1 null mutant to grow on isomaltose. The sequence is that of Oligo-1,6-glucosidase IMA3 (IMA3) from Saccharomyces cerevisiae (strain ATCC 204508 / S288c) (Baker's yeast).